The primary structure comprises 364 residues: DNA replication and repair protein RecF (364 aa).

30–37 contacts ATP; the sequence is GNNAQGKT.

It belongs to the RecF family.

It localises to the cytoplasm. Its function is as follows. The RecF protein is involved in DNA metabolism; it is required for DNA replication and normal SOS inducibility. RecF binds preferentially to single-stranded, linear DNA. It also seems to bind ATP. The polypeptide is DNA replication and repair protein RecF (Clostridium botulinum (strain Langeland / NCTC 10281 / Type F)).